A 934-amino-acid polypeptide reads, in one-letter code: Bifunctional uridylyltransferase/uridylyl-removing enzyme (934 aa).

Residues 1–379 (MSAHDLKLEE…TFSRRKRKLS (379 aa)) form a uridylyltransferase region. The tract at residues 380–736 (DDGAFISENH…AKPHAFEAVT (357 aa)) is uridylyl-removing. The HD domain occupies 496–613 (VDEHLLRCIA…IDFADTVQTM (118 aa)). 2 ACT domains span residues 737–818 (EITV…DMLA) and 848–931 (VIEV…RSPQ).

Belongs to the GlnD family. The cofactor is Mg(2+).

The catalysed reaction is [protein-PII]-L-tyrosine + UTP = [protein-PII]-uridylyl-L-tyrosine + diphosphate. It catalyses the reaction [protein-PII]-uridylyl-L-tyrosine + H2O = [protein-PII]-L-tyrosine + UMP + H(+). Uridylyltransferase (UTase) activity is inhibited by glutamine, while glutamine activates uridylyl-removing (UR) activity. Functionally, modifies, by uridylylation and deuridylylation, the PII regulatory proteins (GlnB and homologs), in response to the nitrogen status of the cell that GlnD senses through the glutamine level. Under low glutamine levels, catalyzes the conversion of the PII proteins and UTP to PII-UMP and PPi, while under higher glutamine levels, GlnD hydrolyzes PII-UMP to PII and UMP (deuridylylation). Thus, controls uridylylation state and activity of the PII proteins, and plays an important role in the regulation of nitrogen assimilation and metabolism. The chain is Bifunctional uridylyltransferase/uridylyl-removing enzyme from Brucella suis (strain ATCC 23445 / NCTC 10510).